The following is a 194-amino-acid chain: Imidazoleglycerol-phosphate dehydratase (194 aa).

It belongs to the imidazoleglycerol-phosphate dehydratase family.

The protein resides in the cytoplasm. The catalysed reaction is D-erythro-1-(imidazol-4-yl)glycerol 3-phosphate = 3-(imidazol-4-yl)-2-oxopropyl phosphate + H2O. It participates in amino-acid biosynthesis; L-histidine biosynthesis; L-histidine from 5-phospho-alpha-D-ribose 1-diphosphate: step 6/9. The chain is Imidazoleglycerol-phosphate dehydratase from Oceanobacillus iheyensis (strain DSM 14371 / CIP 107618 / JCM 11309 / KCTC 3954 / HTE831).